We begin with the raw amino-acid sequence, 134 residues long: Beta-synuclein (134 aa).

2 repeat units span residues 20–30 (EKTKQGVTEAA) and 31–41 (EKTKEGVLYVG). The tract at residues 20–67 (EKTKQGVTEAAEKTKEGVLYVGSKTREGVVQGVASVAEKTKEQASHLG) is 4 X 11 AA tandem repeats of [EGS]-K-T-K-[EQ]-[GQ]-V-X(4). The stretch at 42–56 (SKTREGVVQGVASVA) is one 3; approximate repeat. Copy 4 of the repeat occupies 57–67 (EKTKEQASHLG). Residues 89–134 (FPTDLKPEEVAQEAAEEPLIEPLMEPEGESYEDPPQEEYQEYEPEA) are disordered. A compositionally biased stretch (acidic residues) spans 98 to 134 (VAQEAAEEPLIEPLMEPEGESYEDPPQEEYQEYEPEA). Serine 118 carries the post-translational modification Phosphoserine; by BARK1, CK2 and GRK5.

Belongs to the synuclein family. In terms of processing, phosphorylated. Phosphorylation by G-protein coupled receptor kinases (GRK) is more efficient than phosphorylation by CK1, CK2 and CaM-kinase II. As to expression, expressed predominantly in brain; concentrated in presynaptic nerve terminals.

Its subcellular location is the cytoplasm. In terms of biological role, non-amyloid component of senile plaques found in Alzheimer disease. Could act as a regulator of SNCA aggregation process. Protects neurons from staurosporine and 6-hydroxy dopamine (6OHDA)-stimulated caspase activation in a p53/TP53-dependent manner. Contributes to restore the SNCA anti-apoptotic function abolished by 6OHDA. Not found in the Lewy bodies associated with Parkinson disease. In Homo sapiens (Human), this protein is Beta-synuclein (SNCB).